Reading from the N-terminus, the 272-residue chain is 27-O-demethylrifamycin SV methyltransferase (272 aa).

Residues serine 89, glutamine 94, 117 to 118 (DA), leucine 134, and histidine 139 each bind S-adenosyl-L-methionine.

The protein belongs to the class I-like SAM-binding methyltransferase superfamily. As to quaternary structure, exists probably as a trimer.

The catalysed reaction is 27-O-demethylrifamycin SV + S-adenosyl-L-methionine = rifamycin SV + S-adenosyl-L-homocysteine + H(+). The protein operates within antibiotic biosynthesis; rifamycin B biosynthesis. With respect to regulation, slightly inhibited by Ca(2+) and Mg(2+). Strongly inhibited by Zn(2+), Ni(2+) and Co(2+). Its function is as follows. Catalyzes the methylation of 27-O-demethylrifamycin SV (DMRSV) to rifamycin SV. This chain is 27-O-demethylrifamycin SV methyltransferase, found in Amycolatopsis mediterranei (strain S699) (Nocardia mediterranei).